Here is a 165-residue protein sequence, read N- to C-terminus: uncharacterized protein (165 aa).

The disordered stretch occupies residues 1-36 (MTRLCLPRPEAREDPIPVPPRGLGAGEGSGSPVRPP). Residues 135-155 (LLLLMGLGPLLRACGMPLTLL) traverse the membrane as a helical segment.

Its subcellular location is the membrane. This is an uncharacterized protein from Homo sapiens (Human).